Reading from the N-terminus, the 650-residue chain is MICOS complex subunit MIC60, mitochondrial (650 aa).

Residues 1 to 34 (MLRKSVLELSSRLSIKRFPRNLGAQRFHLSSSRN) constitute a mitochondrion transit peptide. Residues 26–74 (RFHLSSSRNASTSGKNGLPGAKPVGKPDASKVDPPKVTPPPPTKGNSSK) are disordered. A compositionally biased stretch (polar residues) spans 28-40 (HLSSSRNASTSGK). Topologically, residues 35 to 74 (ASTSGKNGLPGAKPVGKPDASKVDPPKVTPPPPTKGNSSK) are mitochondrial matrix. A helical membrane pass occupies residues 75–95 (VVIGGVAIAGAFLVAYQTGYL). At 96–549 (DQYLGKEQQK…FDTLKGTLRH (454 aa)) the chain is on the mitochondrial intermembrane side. Disordered regions lie at residues 121 to 168 (EAHH…ESDL), 239 to 267 (QSSSVHRESETESASPKDPAALKTPEDGI), and 284 to 304 (EGSDTESTGSSSIGEQITKET). Over residues 284–299 (EGSDTESTGSSSIGEQ) the composition is skewed to low complexity. Coiled coils occupy residues 345–369 (AQVFAEELRALKEKYENELRDLRAR) and 396–430 (KAIQERMEDKLKAELEQKETEAQLALSKAEELAKA). The chain crosses the membrane as a helical span at residues 550–570 (FSLIPPGGGGILAHSLAHVAS). Residues 571 to 650 (SLKFKEVDQA…QSYATCVSLT (80 aa)) lie on the Mitochondrial matrix side of the membrane.

It belongs to the MICOS complex subunit Mic60 family. In terms of assembly, component of the mitochondrial contact site and cristae organizing system (MICOS) complex. The MICOS complex associates with mitochondrial outer membrane proteins. Present in a large lipid-enriched complex called mitochondrial transmembrane lipoprotein (MTL) complex made of proteins located in the two mitochondrial membranes, including the TOM complex and the core components of the MICOS complex and containing at least digalactosyldiacylglycerol (DGDG). Binds to TOM40-1. Component of a mitochondrial large protein complex that contains, at least, MIC60, DGS1, TOM40, TOM20 proteins, and petC/RISP.

The protein resides in the mitochondrion inner membrane. Its function is as follows. Component of the MICOS complex, a large protein complex of the mitochondrial inner membrane that plays crucial roles in the maintenance of crista junctions, inner membrane architecture, and formation of contact sites to the outer membrane. Plays a role in keeping cristae membranes connected to the inner boundary membrane. Also promotes protein import via the mitochondrial intermembrane space assembly (MIA) pathway. Involved in the maintenance of mitochondria morphology. Binds to glycerolipids such as cardiolipin (CL). Contributes to the export of phosphatidylethanolamine (PE) from mitochondria and to the import of galactoglycerolipids from plastids during phosphate (Pi) starvation. Promotes lipid desorption from membranes, likely as an initial step for lipid transfer, and regulates probably the tethering between the inner and outer membranes of mitochondria by binding to TOM40 proteins. The polypeptide is MICOS complex subunit MIC60, mitochondrial (Arabidopsis thaliana (Mouse-ear cress)).